A 139-amino-acid chain; its full sequence is 3-hydroxyacyl-[acyl-carrier-protein] dehydratase FabZ (139 aa).

Histidine 46 is a catalytic residue.

The protein belongs to the thioester dehydratase family. FabZ subfamily.

The protein localises to the cytoplasm. The enzyme catalyses a (3R)-hydroxyacyl-[ACP] = a (2E)-enoyl-[ACP] + H2O. Its function is as follows. Involved in unsaturated fatty acids biosynthesis. Catalyzes the dehydration of short chain beta-hydroxyacyl-ACPs and long chain saturated and unsaturated beta-hydroxyacyl-ACPs. In Petrotoga mobilis (strain DSM 10674 / SJ95), this protein is 3-hydroxyacyl-[acyl-carrier-protein] dehydratase FabZ.